Here is a 193-residue protein sequence, read N- to C-terminus: dCTP deaminase (193 aa).

Residues 110–115 (RSSLAR), Asp128, 136–138 (VLE), Tyr171, Lys178, and Gln182 each bind dCTP. The active-site Proton donor/acceptor is Glu138. The tract at residues 169–193 (RPYNRRQDAKYRDQQGAVASRIDKD) is disordered.

It belongs to the dCTP deaminase family. Homotrimer.

It carries out the reaction dCTP + H2O + H(+) = dUTP + NH4(+). It participates in pyrimidine metabolism; dUMP biosynthesis; dUMP from dCTP (dUTP route): step 1/2. In terms of biological role, catalyzes the deamination of dCTP to dUTP. The polypeptide is dCTP deaminase (Cronobacter sakazakii (strain ATCC BAA-894) (Enterobacter sakazakii)).